Consider the following 429-residue polypeptide: Probable E3 ubiquitin-protein ligase makorin-1 (429 aa).

C3H1-type zinc fingers lie at residues 18-45, 48-75, and 153-180; these read WTKHVTCRYFMHGLCKEGDNCRYSHDLT, KPAAMMCKFFQKGNCVFGERCRFEHCKP, and ELRKQLCPYAAVGECRYGVNCAYLHGDV. The makorin-type Cys-His stretch occupies residues 181 to 208; that stretch reads CDMCGLQVLHPTDSSQRSEHTKACIEAH. An RING-type zinc finger spans residues 226–280; the sequence is CGVCMEVVFEKANPSERRFGILSNCSHCYCLKCIRKWRSAKQFESKIIKSCPECR. A C3H1-type 4 zinc finger spans residues 309–338; that stretch reads GMGRKPCRYFDEGRGICPFGANCFYKHAFP. The disordered stretch occupies residues 343 to 362; it reads EEAQPQRRQTGSSSRNRNSR. A compositionally biased stretch (low complexity) spans 348–358; that stretch reads QRRQTGSSSRN.

It carries out the reaction S-ubiquitinyl-[E2 ubiquitin-conjugating enzyme]-L-cysteine + [acceptor protein]-L-lysine = [E2 ubiquitin-conjugating enzyme]-L-cysteine + N(6)-ubiquitinyl-[acceptor protein]-L-lysine.. It participates in protein modification; protein ubiquitination. Its function is as follows. E3 ubiquitin ligase catalyzing the covalent attachment of ubiquitin moieties onto substrate proteins. The sequence is that of Probable E3 ubiquitin-protein ligase makorin-1 from Takifugu rubripes (Japanese pufferfish).